The chain runs to 151 residues: Transcriptional repressor NrdR (151 aa).

Residues 3-34 (CPHCGNCDDKVMESRTLAQGDCIRRRRECLAC) fold into a zinc finger. An ATP-cone domain is found at 49–141 (FMVIKKDGRR…VYKQFSNLDE (93 aa)).

The protein belongs to the NrdR family. It depends on Zn(2+) as a cofactor.

Its function is as follows. Negatively regulates transcription of bacterial ribonucleotide reductase nrd genes and operons by binding to NrdR-boxes. The polypeptide is Transcriptional repressor NrdR (Treponema denticola (strain ATCC 35405 / DSM 14222 / CIP 103919 / JCM 8153 / KCTC 15104)).